The sequence spans 642 residues: Mini-chromosome maintenance complex-binding protein (642 aa).

The segment covering 151-161 (ARVSPSTSYTP) has biased composition (polar residues). Residues 151–200 (ARVSPSTSYTPSRHKRSYEDDEDMDLQPNKQKDQHSGARQAGGLGGLHWR) form a disordered region. The residue at position 154 (Ser-154) is a Phosphoserine. Position 160 is a phosphothreonine (Thr-160). Residues Ser-167 and Ser-298 each carry the phosphoserine modification.

Belongs to the MCMBP family. Interacts with the MCM complex: associates with the MCM3-7 complex which lacks MCM2, while it does not interact with the MCM complex when MCM2 is present (MCM2-7 complex). Interacts with the RPA complex, when composed of all RPA1, RPA2 and RPA3 components, but not with RPA1 or RPA2 alone.

The protein resides in the nucleus. Associated component of the MCM complex that acts as a regulator of DNA replication. Binds to the MCM complex during late S phase and promotes the disassembly of the MCM complex from chromatin, thereby acting as a key regulator of pre-replication complex (pre-RC) unloading from replicated DNA. Can dissociate the MCM complex without addition of ATP; probably acts by destabilizing interactions of each individual subunits of the MCM complex. Required for sister chromatid cohesion. This is Mini-chromosome maintenance complex-binding protein (Mcmbp) from Rattus norvegicus (Rat).